Consider the following 450-residue polypeptide: Probable ECA polymerase (450 aa).

A run of 11 helical transmembrane segments spans residues 6–26 (FSGLLVVWLLSTLFIATLTWF), 37–57 (VFFSLLFLLTFFFGFPLTSVL), 63–83 (VGVAPPEILLQALLSAACFYA), 120–140 (LMGIALVSVGIFFMHNGFLLF), 155–175 (GVALKRFFYFFIPAMLVIYFL), 181–201 (AWLFFLVSTVAFGLLTYMIVG), 207–227 (IIIAFAIFLFIGIIRGWISLW), 228–248 (MLVAAGVLGIVGMFWLALKRY), 341–361 (LVVMGGALFIPLGAVAVGLII), 378–398 (YKAAILHSFCFGAIFNMIVLA), and 410–430 (VFFLVIFGACLLVAKLLFWLF).

This sequence belongs to the WzyE family. In terms of assembly, probably part of a complex composed of WzxE, WzyE and WzzE.

It is found in the cell inner membrane. It functions in the pathway bacterial outer membrane biogenesis; enterobacterial common antigen biosynthesis. Its function is as follows. Probably involved in the polymerization of enterobacterial common antigen (ECA) trisaccharide repeat units. In Citrobacter koseri (strain ATCC BAA-895 / CDC 4225-83 / SGSC4696), this protein is Probable ECA polymerase.